The chain runs to 557 residues: Formate--tetrahydrofolate ligase (557 aa).

An ATP-binding site is contributed by 65 to 72; it reads SPAGEGKT.

The protein belongs to the formate--tetrahydrofolate ligase family.

The enzyme catalyses (6S)-5,6,7,8-tetrahydrofolate + formate + ATP = (6R)-10-formyltetrahydrofolate + ADP + phosphate. It participates in one-carbon metabolism; tetrahydrofolate interconversion. The protein is Formate--tetrahydrofolate ligase of Methylobacillus flagellatus (strain ATCC 51484 / DSM 6875 / VKM B-1610 / KT).